The chain runs to 881 residues: Valine--tRNA ligase (881 aa).

The 'HIGH' region signature appears at 49 to 59; the sequence is PNVTGKLHLGH. The short motif at 526 to 530 is the 'KMSKS' region element; sequence KMSKS. K529 is a binding site for ATP. A coiled-coil region spans residues 810 to 881; that stretch reads LADLINLDEE…VRQRLADLEK (72 aa).

The protein belongs to the class-I aminoacyl-tRNA synthetase family. ValS type 1 subfamily. In terms of assembly, monomer.

It localises to the cytoplasm. It catalyses the reaction tRNA(Val) + L-valine + ATP = L-valyl-tRNA(Val) + AMP + diphosphate. Functionally, catalyzes the attachment of valine to tRNA(Val). As ValRS can inadvertently accommodate and process structurally similar amino acids such as threonine, to avoid such errors, it has a 'posttransfer' editing activity that hydrolyzes mischarged Thr-tRNA(Val) in a tRNA-dependent manner. The sequence is that of Valine--tRNA ligase from Bacillus cereus (strain ATCC 14579 / DSM 31 / CCUG 7414 / JCM 2152 / NBRC 15305 / NCIMB 9373 / NCTC 2599 / NRRL B-3711).